The following is a 521-amino-acid chain: Protein NRT1/ PTR FAMILY 4.2 (521 aa).

The next 12 membrane-spanning stretches (helical) occupy residues 30–50, 65–85, 89–109, 133–153, 172–192, 204–224, 297–317, 338–358, 381–401, 413–433, 451–471, and 498–518; these read IVCV…FNFV, ANMV…GGFI, FVTH…GLIL, AILF…KASL, FFDW…TVVL, FNIS…GLPF, FLGL…VAQL, IPVP…IPLY, IGLG…VEAK, ISVL…MLTL, ISTA…TTLV, and LFYV…IFWA.

It belongs to the major facilitator superfamily. Proton-dependent oligopeptide transporter (POT/PTR) (TC 2.A.17) family. As to expression, expressed in siliques.

Its subcellular location is the membrane. Its function is as follows. Involved in abscisic acid transport. This is Protein NRT1/ PTR FAMILY 4.2 (NPF4.2) from Arabidopsis thaliana (Mouse-ear cress).